A 521-amino-acid chain; its full sequence is Cytochrome P450 monooxygenase ARMGADRAFT_1018420 (521 aa).

A helical transmembrane segment spans residues 9-26 (VSPIWILTAIVVVAYTTV). Cys-443 provides a ligand contact to heme. Asn-450 carries N-linked (GlcNAc...) asparagine glycosylation.

This sequence belongs to the cytochrome P450 family. Requires heme as cofactor.

Its subcellular location is the membrane. Its pathway is secondary metabolite biosynthesis. In terms of biological role, cytochrome P450 monooxygenase, part of the gene cluster that mediates the biosynthesis of melleolides, a range of antifungal and phytotoxic polyketide derivatives composed of an orsellinic acid (OA) moiety esterified to various sesquiterpene alcohols. The first step in melleolides biosynthesis is performed by the delta(6)-protoilludene synthase PRO1 which catalyzes the cyclization of farnesyl diphosphate to protoilludene. The orsellinic acid synthase armB produces OA by condensing acetyl-CoA with 3 malonyl-CoA units in a three-round chain elongation reaction folowed by a C2-C7 ring closure. ArmB further catalyzes the trans-esterification of OA to the various sesquiterpene alcohols resulting from the hydroxylation of protoilludene. The melleolides cluster also includes 5 cytochrome P450 monooxygenases, 4 NAD(+)-dependent oxidoreductases, one flavin-dependent oxidoreductase, and one O-methyltransferase. The cytochrome P450 monooxygenases may be involved in protoilludene hydroxylation to elaborate melleolides with multiple alcohol groups, such as melleolide D, which carries alcohol functionalities at C-4, C-5, C-10, and C-13. The role of the NAD(+)-dependent enzymes remains unknown. Numerous melleolides, including arnamial, show 5'-O-methylation of the aromatic moiety which may be catalyzed by the methyltransferase encoded in the cluster. The flavin-dependent oxidoreductase might represent the dehydrogenase yielding the aldehyde in position 1 of arnamial and other melleolides. Finally, several halogenase localized outside of the cluster, are able to catalyze the transfer of a single chlorine atom to the melleolide backbone, resulting in a 6'-chloromelleolide product. The protein is Cytochrome P450 monooxygenase ARMGADRAFT_1018420 of Armillaria gallica (Bulbous honey fungus).